We begin with the raw amino-acid sequence, 64 residues long: Large ribosomal subunit protein bL35 (64 aa).

The disordered stretch occupies residues 1 to 25 (MPKMKTHRGAAKRLKKTGTGKLKRA).

It belongs to the bacterial ribosomal protein bL35 family.

The polypeptide is Large ribosomal subunit protein bL35 (Clostridioides difficile (strain 630) (Peptoclostridium difficile)).